The chain runs to 199 residues: NADH-quinone oxidoreductase subunit C (199 aa).

It belongs to the complex I 30 kDa subunit family. As to quaternary structure, NDH-1 is composed of 14 different subunits. Subunits NuoB, C, D, E, F, and G constitute the peripheral sector of the complex.

It localises to the cell membrane. The enzyme catalyses a quinone + NADH + 5 H(+)(in) = a quinol + NAD(+) + 4 H(+)(out). NDH-1 shuttles electrons from NADH, via FMN and iron-sulfur (Fe-S) centers, to quinones in the respiratory chain. The immediate electron acceptor for the enzyme in this species is believed to be ubiquinone. Couples the redox reaction to proton translocation (for every two electrons transferred, four hydrogen ions are translocated across the cytoplasmic membrane), and thus conserves the redox energy in a proton gradient. The chain is NADH-quinone oxidoreductase subunit C from Polynucleobacter asymbioticus (strain DSM 18221 / CIP 109841 / QLW-P1DMWA-1) (Polynucleobacter necessarius subsp. asymbioticus).